We begin with the raw amino-acid sequence, 268 residues long: Tryptophan synthase alpha chain (268 aa).

Residues glutamate 49 and aspartate 60 each act as proton acceptor in the active site.

This sequence belongs to the TrpA family. Tetramer of two alpha and two beta chains.

It carries out the reaction (1S,2R)-1-C-(indol-3-yl)glycerol 3-phosphate + L-serine = D-glyceraldehyde 3-phosphate + L-tryptophan + H2O. It participates in amino-acid biosynthesis; L-tryptophan biosynthesis; L-tryptophan from chorismate: step 5/5. The alpha subunit is responsible for the aldol cleavage of indoleglycerol phosphate to indole and glyceraldehyde 3-phosphate. This chain is Tryptophan synthase alpha chain, found in Pseudomonas aeruginosa (strain LESB58).